Here is a 588-residue protein sequence, read N- to C-terminus: Outer membrane transporter CdiB (588 aa).

One can recognise a POTRA domain in the interval 104 to 179 (FTVSSIVVSG…GVLHITVMEG (76 aa)).

It belongs to the TPS (TC 1.B.20) family.

Its subcellular location is the cell outer membrane. Potential outer membrane protein component of a toxin-immunity protein module, which functions as a cellular contact-dependent growth inhibition (CDI) system. CDI modules allow bacteria to communicate with and inhibit the growth of closely related neighboring bacteria in a contact-dependent fashion. This protein may be required for secretion and assembly of the CdiA toxin protein. Inhibitory cells must be in logarithmic (not stationary) phase to inhibit growth of their targets, while the presence of P or S but not type 1 pili protects the target cells against growth inhibition. In terms of biological role, probable member of a two partner secretion pathway (TPS) in which it mediates the secretion of CdiA. This chain is Outer membrane transporter CdiB, found in Escherichia coli.